The primary structure comprises 491 residues: Angiopoietin-related protein 1 (491 aa).

Residues 1-23 (MKTFTWTLGVLFFLLVDTGHCRG) form the signal peptide. A coiled-coil region spans residues 80–168 (ITRMDLENLK…LNVTTEMLKM (89 aa)). Residues N160 and N188 are each glycosylated (N-linked (GlcNAc...) asparagine). Residues 271-491 (FINEGPFKDC…AVQMMIKPID (221 aa)) enclose the Fibrinogen C-terminal domain. 2 disulfides stabilise this stretch: C280-C309 and C432-C445.

In terms of tissue distribution, highly expressed in adrenal gland, placenta, thyroid gland, heart, skeletal muscle and small intestine. Weakly expressed in testis, ovary, colon, pancreas, kidney and stomach.

Its subcellular location is the secreted. In Homo sapiens (Human), this protein is Angiopoietin-related protein 1 (ANGPTL1).